Consider the following 147-residue polypeptide: Small ribosomal subunit protein uS12 (147 aa).

It belongs to the universal ribosomal protein uS12 family. Part of the 30S ribosomal subunit.

Functionally, with S4 and S5 plays an important role in translational accuracy. Located at the interface of the 30S and 50S subunits. This is Small ribosomal subunit protein uS12 from Pyrobaculum calidifontis (strain DSM 21063 / JCM 11548 / VA1).